The following is a 104-amino-acid chain: ATP-dependent Clp protease adapter protein ClpS (104 aa).

Belongs to the ClpS family. Binds to the N-terminal domain of the chaperone ClpA.

In terms of biological role, involved in the modulation of the specificity of the ClpAP-mediated ATP-dependent protein degradation. In Bordetella avium (strain 197N), this protein is ATP-dependent Clp protease adapter protein ClpS.